We begin with the raw amino-acid sequence, 143 residues long: MSVIRPTTVEVETSLRLVAPDATALPVRASLRYDPADPYAVHVLFHAESAGGEAVSWSFARELLVTGLDEPAGIGDVRVWPWATPRGDFVALALSSPDGNALFEVPRSVLVRFLRRTYVVVARGREAEHLDVDTAVNRLLAGR.

It belongs to the SsgA family. Interacts with SsgA. Interacts with FtsZ (via N-terminus).

It is found in the cell septum. Its function is as follows. Involved in sporulation-specific cell division. Required for early stages of sporulation. Important in the process of growth cessation prior to sporulation-specific cell division. Recruits cell division protein FtsZ to the future septum sites and tethers the contractile ring structure (Z ring) to the cytoplasmic membrane during sporulation. Stimulates polymerization and filament length of FtsZ in vitro. The chain is Sporulation-specific cell division protein SsgB from Salinispora tropica (strain ATCC BAA-916 / DSM 44818 / JCM 13857 / NBRC 105044 / CNB-440).